Here is a 176-residue protein sequence, read N- to C-terminus: Flavodoxin (176 aa).

Residues 4–165 form the Flavodoxin-like domain; sequence IGIFFGSDTG…RVEKWVKQVA (162 aa).

The protein belongs to the flavodoxin family. Requires FMN as cofactor.

Functionally, low-potential electron donor to a number of redox enzymes. This Klebsiella pneumoniae protein is Flavodoxin (fldA).